The chain runs to 360 residues: Nucleoporin SEH1-B (360 aa).

WD repeat units lie at residues 10 to 49 (DHKD…NWHC), 55 to 96 (THSG…SNDK), 111 to 152 (DSRT…NLSQ), 160 to 210 (SCKL…RKYA), 217 to 258 (SVSD…KELS), and 276 to 315 (NHNS…NWKC).

The protein belongs to the WD repeat SEC13 family. In terms of assembly, component of the Nup107-160 subcomplex of the nuclear pore complex (NPC). The Nup107-160 subcomplex includes NUP160, NUP133, NUP107, NUP98, NUP85, NUP43, NUP37, SEH1 and SEC13. Component of the GATOR2 subcomplex, composed of MIOS, SEC13, SEH1L, WDR24 and WDR59. The GATOR2 complex interacts with CASTOR1 and CASTOR2; the interaction is negatively regulated by arginine. The GATOR2 complex interacts with SESN1, SESN2 and SESN3; the interaction is negatively regulated by amino acids.

It localises to the chromosome. It is found in the centromere. The protein localises to the kinetochore. Its subcellular location is the nucleus. The protein resides in the nuclear pore complex. It localises to the lysosome membrane. With respect to regulation, the GATOR2 complex is negatively regulated by the upstream amino acid sensors CASTOR1 and SESN2, which sequester the GATOR2 complex in absence of amino acids. In the presence of abundant amino acids, GATOR2 is released from CASTOR1 and SESN2 and activated. Functionally, component of the Nup107-160 subcomplex of the nuclear pore complex (NPC). The Nup107-160 subcomplex is required for the assembly of a functional NPC. The Nup107-160 subcomplex is also required for normal kinetochore microtubule attachment, mitotic progression and chromosome segregation. This subunit plays a role in recruitment of the Nup107-160 subcomplex to the kinetochore. Its function is as follows. As a component of the GATOR2 complex, functions as an activator of the amino acid-sensing branch of the mTORC1 signaling pathway. The GATOR2 complex indirectly activates mTORC1 through the inhibition of the GATOR1 subcomplex. GATOR2 probably acts as an E3 ubiquitin-protein ligase toward GATOR1. In the presence of abundant amino acids, the GATOR2 complex mediates ubiquitination of the NPRL2 core component of the GATOR1 complex, leading to GATOR1 inactivation. In the absence of amino acids, GATOR2 is inhibited, activating the GATOR1 complex. This chain is Nucleoporin SEH1-B (seh1l-b), found in Xenopus laevis (African clawed frog).